The following is a 116-amino-acid chain: Non-specific lipid transfer protein GPI-anchored 17 (116 aa).

The first 24 residues, 1–24, serve as a signal peptide directing secretion; that stretch reads MKIGVVLVLLTVFVVVMSSTSVSA. Disulfide bonds link cysteine 31–cysteine 74, cysteine 42–cysteine 58, and cysteine 59–cysteine 99. A lipid anchor (GPI-anchor amidated asparagine) is attached at asparagine 107. A propeptide spans 108–116 (removed in mature form); that stretch reads GKNFKNTSL. An N-linked (GlcNAc...) asparagine glycan is attached at asparagine 113.

Belongs to the plant LTP family. Expressed in seedlings, preferentially in roots.

The protein resides in the cell membrane. In terms of biological role, probable lipid transfer protein. The polypeptide is Non-specific lipid transfer protein GPI-anchored 17 (Arabidopsis thaliana (Mouse-ear cress)).